We begin with the raw amino-acid sequence, 471 residues long: UDP-N-acetylmuramoylalanine--D-glutamate ligase (471 aa).

An ATP-binding site is contributed by 120 to 126; the sequence is GSNGKTT.

This sequence belongs to the MurCDEF family.

It localises to the cytoplasm. It carries out the reaction UDP-N-acetyl-alpha-D-muramoyl-L-alanine + D-glutamate + ATP = UDP-N-acetyl-alpha-D-muramoyl-L-alanyl-D-glutamate + ADP + phosphate + H(+). The protein operates within cell wall biogenesis; peptidoglycan biosynthesis. Cell wall formation. Catalyzes the addition of glutamate to the nucleotide precursor UDP-N-acetylmuramoyl-L-alanine (UMA). This is UDP-N-acetylmuramoylalanine--D-glutamate ligase from Nitrosomonas europaea (strain ATCC 19718 / CIP 103999 / KCTC 2705 / NBRC 14298).